A 716-amino-acid polypeptide reads, in one-letter code: MTELSSEARAIVEGRHSDPFHYLGCHRETDRKVVRVYLPDASEVRLIDETGEEIILTRIHDAGLFLGDLPDRAERYRLRARYGADLVELEDPYRFPPILDDFDLYLLGEGTHQRIYDKLGAHPMAMEGVDGAGFVVLAPNARAVAVVGDFNFWDRRRHPMRVRGNGYWELFIPGARAGDRYKFAITAQDGSLLPLKSDPMAFAAEVRPNTASIIFDQARLPRPTPLAATINARGVPISIYEVHLGSWRRSDGNRWLSYRELAETLPDYVRELGFTHIELMPVNEHPFDGSWGYQPTGLYAPTSRFGSPEDFAHLIDACHREGLGLLLDWVPGHFPDDPHGLGRFDGTSLYEHANPLQGRHLDWDTLIYNYGRTEVVNFLVANALFWLDRYGIDGLRVDAVASMLYLDYSRPEGGWIPNKHGGRENLEAIEFLRRFNREVFGRFPNATTVAEESTAWPQVSRPIEFGGLGFGYKWNMGWMHDTLSYFEKDPIHRKHHHDQILFGLHYAFSENFILPLSHDEVVHGKRSILGRMPGDDWQRFANLRAYYAFMFGHPGKKLMFMGAEFGQEREWNHDHALDWHLLDQARHQGVQAVVRDLNKLYREVPALHEFDCDPAGFEWIVANDADHSVFAWMRKGASGRARCLVIANLTPTIHRDYRVRVPFTGRWREALNTDSAHYGGSNVGNDGAIETSGEIIPELVLTLPPLGVIFLVPEAA.

D398 functions as the Nucleophile in the catalytic mechanism. The Proton donor role is filled by E451.

Belongs to the glycosyl hydrolase 13 family. GlgB subfamily. Monomer.

The catalysed reaction is Transfers a segment of a (1-&gt;4)-alpha-D-glucan chain to a primary hydroxy group in a similar glucan chain.. It participates in glycan biosynthesis; glycogen biosynthesis. Functionally, catalyzes the formation of the alpha-1,6-glucosidic linkages in glycogen by scission of a 1,4-alpha-linked oligosaccharide from growing alpha-1,4-glucan chains and the subsequent attachment of the oligosaccharide to the alpha-1,6 position. This chain is 1,4-alpha-glucan branching enzyme GlgB, found in Nitrobacter winogradskyi (strain ATCC 25391 / DSM 10237 / CIP 104748 / NCIMB 11846 / Nb-255).